Here is a 451-residue protein sequence, read N- to C-terminus: MIDSEALENERTKLKREIAELRAALNRKEQCLRDLETTISEATGDEDDVHPDTNGGVCHTQLSNDDIARYSRQLILPDFGVQGQLRLKNSSVLIVGMGGLGCPAAQYLAAAGCGKLGLIDYDEVERSNFHRQILHSEARCGMSKAESARIALLELNQHCEIRCHTRLLNSRNAMHIIRTYDVVLDCSDNVATRYLLNDACVMLRKPLVSGSALKTDGQLTVYCYGNGPCYRCIYPVPPPPEAVTNCGDGGVLGAVTGTIGAMQALEAIKVIVGLGDVLAGRLLIFDGSSCLFRNIRIRSKRPNCHVCSAQPLITELIDYELFCGMHATDKDNPLQLLASEERLDVEEYRNKVQQQPHLLIDVRQPAEFEICQLPDAVNVPLAEVLDDSYLKRFSKQLEDTQLPIILLCRRGNDSQIAVQHVRNRFPKHSIRDIIGGLHAWTHKVDPSFPIY.

A Phosphothreonine modification is found at threonine 60. ATP-binding positions include glycine 99, aspartate 120, 127–131, lysine 144, and 188–189; these read SNFHR and DN. Cysteine 229 and cysteine 232 together coordinate Zn(2+). Residue cysteine 246 is the Glycyl thioester intermediate; for adenylyltransferase activity of the active site. Cysteine 304 and cysteine 307 together coordinate Zn(2+). Positions 353-449 constitute a Rhodanese domain; that stretch reads QQQPHLLIDV…WTHKVDPSFP (97 aa). The active-site Cysteine persulfide intermediate; for sulfurtransferase activity is cysteine 408.

In the N-terminal section; belongs to the HesA/MoeB/ThiF family. UBA4 subfamily. Requires Zn(2+) as cofactor.

The protein resides in the cytoplasm. Its subcellular location is the cytosol. It catalyses the reaction [molybdopterin-synthase sulfur-carrier protein]-C-terminal Gly-Gly + ATP + H(+) = [molybdopterin-synthase sulfur-carrier protein]-C-terminal Gly-Gly-AMP + diphosphate. It carries out the reaction [molybdopterin-synthase sulfur-carrier protein]-C-terminal Gly-Gly-AMP + S-sulfanyl-L-cysteinyl-[cysteine desulfurase] + AH2 = [molybdopterin-synthase sulfur-carrier protein]-C-terminal-Gly-aminoethanethioate + L-cysteinyl-[cysteine desulfurase] + A + AMP + 2 H(+). Its pathway is tRNA modification; 5-methoxycarbonylmethyl-2-thiouridine-tRNA biosynthesis. The protein operates within cofactor biosynthesis; molybdopterin biosynthesis. Plays a central role in 2-thiolation of mcm(5)S(2)U at tRNA wobble positions of cytosolic tRNA(Lys), tRNA(Glu) and tRNA(Gln). Also essential during biosynthesis of the molybdenum cofactor. Acts by mediating the C-terminal thiocarboxylation of sulfur carriers URM1 and MOCS2A. Its N-terminus first activates URM1 and MOCS2A as acyl-adenylates (-COAMP), then the persulfide sulfur on the catalytic cysteine is transferred to URM1 and MOCS2A to form thiocarboxylation (-COSH) of their C-terminus. The reaction probably involves hydrogen sulfide that is generated from the persulfide intermediate and that acts as a nucleophile towards URM1 and MOCS2A. Subsequently, a transient disulfide bond is formed. Does not use thiosulfate as sulfur donor; NFS1 probably acting as a sulfur donor for thiocarboxylation reactions. The chain is Adenylyltransferase and sulfurtransferase MOCS3 from Drosophila ananassae (Fruit fly).